The primary structure comprises 127 residues: Small ribosomal subunit protein uS13 (127 aa).

The interval P97–K127 is disordered. The span at Q101 to K127 shows a compositional bias: basic residues.

Belongs to the universal ribosomal protein uS13 family. In terms of assembly, part of the 30S ribosomal subunit. Forms a loose heterodimer with protein S19. Forms two bridges to the 50S subunit in the 70S ribosome.

Its function is as follows. Located at the top of the head of the 30S subunit, it contacts several helices of the 16S rRNA. In the 70S ribosome it contacts the 23S rRNA (bridge B1a) and protein L5 of the 50S subunit (bridge B1b), connecting the 2 subunits; these bridges are implicated in subunit movement. Contacts the tRNAs in the A and P-sites. The polypeptide is Small ribosomal subunit protein uS13 (Microcystis aeruginosa (strain NIES-843 / IAM M-2473)).